The sequence spans 348 residues: Phosphate acyltransferase (348 aa).

This sequence belongs to the PlsX family. In terms of assembly, homodimer. Probably interacts with PlsY.

It localises to the cytoplasm. The enzyme catalyses a fatty acyl-[ACP] + phosphate = an acyl phosphate + holo-[ACP]. It participates in lipid metabolism; phospholipid metabolism. Catalyzes the reversible formation of acyl-phosphate (acyl-PO(4)) from acyl-[acyl-carrier-protein] (acyl-ACP). This enzyme utilizes acyl-ACP as fatty acyl donor, but not acyl-CoA. This Neisseria gonorrhoeae (strain ATCC 700825 / FA 1090) protein is Phosphate acyltransferase.